The sequence spans 215 residues: Fibroblast growth factor 10 (215 aa).

Residues 1-36 (MWKWILTHCASAFPHLPGCCCCFLLLFLVSSVPVTC) form the signal peptide. The disordered stretch occupies residues 49–73 (TNSSSSSSSSSSSSSFSSPSSAGRH). Residue N50 is glycosylated (N-linked (GlcNAc...) asparagine). The span at 51–69 (SSSSSSSSSSSSSFSSPSS) shows a compositional bias: low complexity. N203 carries N-linked (GlcNAc...) asparagine glycosylation.

Belongs to the heparin-binding growth factors family. In terms of assembly, interacts with FGFR1 and FGFR2. Interacts with FGFBP1. In terms of tissue distribution, preferentially expressed in the lung in adults.

The protein resides in the secreted. In terms of biological role, plays an important role in the regulation of embryonic development, cell proliferation and cell differentiation. Required for normal branching morphogenesis. May play a role in wound healing. The sequence is that of Fibroblast growth factor 10 (Fgf10) from Rattus norvegicus (Rat).